A 902-amino-acid polypeptide reads, in one-letter code: Cytosolic 10-formyltetrahydrofolate dehydrogenase (902 aa).

The hydrolase domain stretch occupies residues 1-310 (MKIAVIGQSL…PASQYYKTAD (310 aa)). 88 to 90 (QFI) is a (6R)-10-formyltetrahydrofolate binding site. His106 functions as the Proton donor in the catalytic mechanism. Asp142 contributes to the (6R)-10-formyltetrahydrofolate binding site. Residues 318–395 (DEEKKFSEEI…EFIQMVVRRL (78 aa)) form the Carrier domain. Ser354 carries the post-translational modification O-(pantetheine 4'-phosphoryl)serine. Residues 417–902 (TVKIPHQLFI…LKTKAVTIEY (486 aa)) form an aldehyde dehydrogenase domain region. NADP(+) contacts are provided by residues 571-573 (IPW), 597-600 (KPAQ), 630-635 (GSLIGQ), 650-651 (GS), and 673-674 (EL). The active-site Proton acceptor is Glu673. Cys707 acts as the Proton donor in catalysis. Residues Lys757 and 804-806 (ESF) each bind NADP(+).

It in the N-terminal section; belongs to the GART family. This sequence in the C-terminal section; belongs to the aldehyde dehydrogenase family. ALDH1L subfamily. As to quaternary structure, homotetramer. Phosphopantetheinylation at Ser-354 by AASDHPPT is required for the formyltetrahydrofolate dehydrogenase activity.

The protein localises to the cytoplasm. Its subcellular location is the cytosol. The catalysed reaction is (6R)-10-formyltetrahydrofolate + NADP(+) + H2O = (6S)-5,6,7,8-tetrahydrofolate + CO2 + NADPH + H(+). Functionally, cytosolic 10-formyltetrahydrofolate dehydrogenase that catalyzes the NADP(+)-dependent conversion of 10-formyltetrahydrofolate to tetrahydrofolate and carbon dioxide. May also have an NADP(+)-dependent aldehyde dehydrogenase activity towards formaldehyde, acetaldehyde, propionaldehyde, and benzaldehyde. Regulates reduced folate pools as well as glycine metabolism. The sequence is that of Cytosolic 10-formyltetrahydrofolate dehydrogenase (aldh1l1) from Xenopus tropicalis (Western clawed frog).